We begin with the raw amino-acid sequence, 332 residues long: Caffeoylshikimate esterase (332 aa).

The segment covering methionine 1 to proline 13 has biased composition (low complexity). The segment at methionine 1–methionine 26 is disordered. Serine 147 serves as the catalytic Nucleophile. Catalysis depends on charge relay system residues aspartate 268 and histidine 298.

Belongs to the AB hydrolase superfamily. Monoacylglycerol lipase family. In terms of assembly, interacts with ACBP2. As to expression, expressed in vasculature of roots and leaves, stems, flowers and siliques.

The protein localises to the cell membrane. The catalysed reaction is 5-O-[(E)-caffeoyl]-shikimate + H2O = shikimate + (E)-caffeate + H(+). In terms of biological role, esterase involved in the biosynthesis of lignin. Hydrolyzes caffeoylshikimate into caffeate and shikimate. Together with 4-coumarate--CoA ligase (4CL), acts on an alternative reaction for the formation of caffeoyl-CoA and bypasses the second reaction of shikimate O-hydroxycinnamoyltransferase (HST). Also accepts 4-coumaroylshikimate as substrate, but with lower activity. According to PubMed:20345607 and PubMed:22915575, possesses monoacylglycerol O-acyltransferase, monoacylglycerol lipase and lysophospholipase activities in vitro. With the association of ACBP2, may promote the degradation of lysophosphatidylcholine and detoxify the peroxidized membrane in response to cadmium-induced oxidative stress. However these results require additional confirmation in vivo. This Arabidopsis thaliana (Mouse-ear cress) protein is Caffeoylshikimate esterase (CSE).